The chain runs to 252 residues: Triosephosphate isomerase (252 aa).

Substrate is bound at residue 10-12 (NWK). His-96 functions as the Electrophile in the catalytic mechanism. The active-site Proton acceptor is the Glu-168. Substrate is bound by residues Gly-174, Ser-214, and 235-236 (GG).

The protein belongs to the triosephosphate isomerase family. Homodimer.

The protein localises to the cytoplasm. The catalysed reaction is D-glyceraldehyde 3-phosphate = dihydroxyacetone phosphate. It participates in carbohydrate biosynthesis; gluconeogenesis. Its pathway is carbohydrate degradation; glycolysis; D-glyceraldehyde 3-phosphate from glycerone phosphate: step 1/1. In terms of biological role, involved in the gluconeogenesis. Catalyzes stereospecifically the conversion of dihydroxyacetone phosphate (DHAP) to D-glyceraldehyde-3-phosphate (G3P). The protein is Triosephosphate isomerase of Streptococcus thermophilus (strain CNRZ 1066).